The chain runs to 173 residues: Alpha-crystallin A chain (173 aa).

N-acetylmethionine is present on Met1. Positions 1-63 (MDIAIQHPWF…RTVLDSGISE (63 aa)) are required for complex formation with BFSP1 and BFSP2. Gln6 bears the Deamidated glutamine; partial mark. Ser45 bears the Phosphoserine mark. Gln50 carries the deamidated glutamine; partial modification. In terms of domain architecture, sHSP spans 52-162 (LFRTVLDSGI…GHSERAIPVS (111 aa)). Lys70 carries the N6-acetyllysine modification. Gln90 carries the post-translational modification Deamidated glutamine; partial. Residue Lys99 is modified to N6-acetyllysine. His100 contributes to the Zn(2+) binding site. At Asn101 the chain carries Deamidated asparagine; partial. Zn(2+)-binding residues include Glu102 and His107. At Ser122 the chain carries Phosphoserine. The residue at position 123 (Asn123) is a Deamidated asparagine; partial. The segment at 144–173 (PKVPSGVDAGHSERAIPVSREEKPSSAPSS) is disordered. The segment covering 153-167 (GHSERAIPVSREEKP) has biased composition (basic and acidic residues). His154 is a binding site for Zn(2+). Ser162 is a glycosylation site (O-linked (GlcNAc) serine).

Belongs to the small heat shock protein (HSP20) family. As to quaternary structure, heteromer composed of three CRYAA and one CRYAB subunits. Inter-subunit bridging via zinc ions enhances stability, which is crucial as there is no protein turn over in the lens. Can also form homodimers and homotetramers (dimers of dimers) which serve as the building blocks of homooligomers. Within homooligomers, the zinc-binding motif is created from residues of 3 different molecules. His-100 and Glu-102 from one molecule are ligands of the zinc ion, and His-107 and His-154 residues from additional molecules complete the site with tetrahedral coordination geometry. Part of a complex required for lens intermediate filament formation composed of BFSP1, BFSP2 and CRYAA. In terms of processing, acetylation at Lys-70 may increase chaperone activity. Post-translationally, undergoes age-dependent proteolytical cleavage at the C-terminus.

Its subcellular location is the cytoplasm. The protein resides in the nucleus. In terms of biological role, contributes to the transparency and refractive index of the lens. Acts as a chaperone, preventing aggregation of various proteins under a wide range of stress conditions. Required for the correct formation of lens intermediate filaments as part of a complex composed of BFSP1, BFSP2 and CRYAA. The protein is Alpha-crystallin A chain (CRYAA) of Pteropus poliocephalus (Grey-headed flying fox).